The chain runs to 86 residues: Weak toxin 2 (86 aa).

The first 23 residues, 1-23, serve as a signal peptide directing secretion; sequence MKTLLLTLVVVAIVCLDLGYTLT. Disulfide bonds link Cys24/Cys45, Cys27/Cys32, Cys38/Cys63, Cys67/Cys78, and Cys79/Cys84.

The protein belongs to the three-finger toxin family. Ancestral subfamily. Orphan group II sub-subfamily. Expressed by the venom gland.

The protein resides in the secreted. Binds with low affinity to muscular (alpha-1-beta-1-delta-epsilon/CHRNA1-CHRNB1-CHRND-CHRNE) and very low affinity to neuronal (alpha-7/CHRNA7) nicotinic acetylcholine receptor (nAChR). The protein is Weak toxin 2 of Bungarus candidus (Malayan krait).